The sequence spans 485 residues: Ribosomal protein uS12 methylthiotransferase RimO (485 aa).

The MTTase N-terminal domain occupies 14–124 (PKVGFISLGC…VMAHVRELLP (111 aa)). 6 residues coordinate [4Fe-4S] cluster: cysteine 23, cysteine 59, cysteine 88, cysteine 167, cysteine 171, and cysteine 174. The region spanning 153 to 389 (LTPRHYAYVK…MEVAQRISRE (237 aa)) is the Radical SAM core domain. The TRAM domain maps to 392–468 (AEKVGRVLDV…EYDLYGEVIH (77 aa)).

Belongs to the methylthiotransferase family. RimO subfamily. The cofactor is [4Fe-4S] cluster.

It localises to the cytoplasm. The enzyme catalyses L-aspartate(89)-[ribosomal protein uS12]-hydrogen + (sulfur carrier)-SH + AH2 + 2 S-adenosyl-L-methionine = 3-methylsulfanyl-L-aspartate(89)-[ribosomal protein uS12]-hydrogen + (sulfur carrier)-H + 5'-deoxyadenosine + L-methionine + A + S-adenosyl-L-homocysteine + 2 H(+). Its function is as follows. Catalyzes the methylthiolation of an aspartic acid residue of ribosomal protein uS12. This Deinococcus geothermalis (strain DSM 11300 / CIP 105573 / AG-3a) protein is Ribosomal protein uS12 methylthiotransferase RimO.